A 392-amino-acid chain; its full sequence is Adenine nucleotide transporter BT1, chloroplastic/mitochondrial (392 aa).

Solcar repeat units lie at residues 108–191 (NPSL…VNKK), 202–286 (IPIP…LRKA), and 296–384 (IGNI…CKKI). Helical transmembrane passes span 113–133 (RLLS…PLET), 168–188 (LVNV…FETV), 204–224 (IPAS…LTYP), 263–283 (APSL…YDSL), 302–322 (LLIG…LEVA), and 359–379 (GLGP…MCYE).

This sequence belongs to the mitochondrial carrier (TC 2.A.29) family. In terms of tissue distribution, expressed in root tips, the central cylinder of young roots, and maturating and germinating pollen.

It localises to the plastid. Its subcellular location is the chloroplast inner membrane. The protein resides in the mitochondrion inner membrane. With respect to regulation, inhibited by pyridoxal 5-phosphate but not mersalyl. Probable mitochondrial adenylate carrier that catalyzes the transport of ATP, ADP and AMP, but not ADP-glucose. Recombinant BT1 shows a unidirectional mode of transport in intact E.coli cells. May function as a plastidial nucleotide uniport carrier required to export newly synthesized adenylates into the cytosol. May be involved in abiotic stress response. The sequence is that of Adenine nucleotide transporter BT1, chloroplastic/mitochondrial (BT1) from Arabidopsis thaliana (Mouse-ear cress).